Reading from the N-terminus, the 192-residue chain is Small ribosomal subunit protein uS5 (192 aa).

Residues 22-85 form the S5 DRBM domain; sequence LVDKLVTINR…DRAKRAMIRV (64 aa).

The protein belongs to the universal ribosomal protein uS5 family. Part of the 30S ribosomal subunit. Contacts proteins S4 and S8.

Functionally, with S4 and S12 plays an important role in translational accuracy. Its function is as follows. Located at the back of the 30S subunit body where it stabilizes the conformation of the head with respect to the body. This is Small ribosomal subunit protein uS5 from Gluconacetobacter diazotrophicus (strain ATCC 49037 / DSM 5601 / CCUG 37298 / CIP 103539 / LMG 7603 / PAl5).